A 241-amino-acid polypeptide reads, in one-letter code: Orotidine 5'-phosphate decarboxylase (241 aa).

Residues D15, K37, 64–73 (DLKYHDIPNT), T126, R187, Q196, G216, and R217 contribute to the substrate site. The active-site Proton donor is the K66.

It belongs to the OMP decarboxylase family. Type 1 subfamily. Homodimer.

The enzyme catalyses orotidine 5'-phosphate + H(+) = UMP + CO2. It functions in the pathway pyrimidine metabolism; UMP biosynthesis via de novo pathway; UMP from orotate: step 2/2. Catalyzes the decarboxylation of orotidine 5'-monophosphate (OMP) to uridine 5'-monophosphate (UMP). The protein is Orotidine 5'-phosphate decarboxylase of Geotalea uraniireducens (strain Rf4) (Geobacter uraniireducens).